Consider the following 317-residue polypeptide: Pantothenate kinase (317 aa).

99 to 106 (GSVSVGKS) provides a ligand contact to ATP.

The protein belongs to the prokaryotic pantothenate kinase family.

It localises to the cytoplasm. It carries out the reaction (R)-pantothenate + ATP = (R)-4'-phosphopantothenate + ADP + H(+). It functions in the pathway cofactor biosynthesis; coenzyme A biosynthesis; CoA from (R)-pantothenate: step 1/5. This Mannheimia succiniciproducens (strain KCTC 0769BP / MBEL55E) protein is Pantothenate kinase.